The chain runs to 164 residues: V-type proton ATPase 16 kDa proteolipid subunit (164 aa).

The Lumenal segment spans residues 1-9 (MASFSGDET). A helical membrane pass occupies residues 10 to 32 (APFFGFLGAAAALVFSCMGAAYG). The Cytoplasmic portion of the chain corresponds to 33 to 54 (TAKSGVGVASMGVMRPELVMKS). The chain crosses the membrane as a helical span at residues 55-75 (IVPVVMAGVLGIYGLIIAVII). Residues 76–94 (STGINPKAKSYYLFDGYAH) are Lumenal-facing. A helical transmembrane segment spans residues 95–116 (LSSGLACGLAGLSAGMAIGIVG). Over 117–128 (DAGVRANAQQPK) the chain is Cytoplasmic. The chain crosses the membrane as a helical span at residues 129-154 (LFVGMILILIFAEALALYGLIVGIIL). Over 155–164 (SSRAGQSRAD) the chain is Lumenal.

It belongs to the V-ATPase proteolipid subunit family. As to quaternary structure, V-ATPase is a heteromultimeric enzyme composed of a peripheral catalytic V1 complex (main components: subunits A, B, C, D, E, and F) attached to an integral membrane V0 proton pore complex (main component: the proteolipid protein; which is present as a hexamer that forms the proton-conducting pore).

It is found in the vacuole membrane. Proton-conducting pore forming subunit of the membrane integral V0 complex of vacuolar ATPase. V-ATPase is responsible for acidifying a variety of intracellular compartments in eukaryotic cells. This chain is V-type proton ATPase 16 kDa proteolipid subunit, found in Vigna radiata var. radiata (Mung bean).